A 340-amino-acid polypeptide reads, in one-letter code: Cathepsin B (340 aa).

The first 17 residues, Met-1–Ala-17, serve as a signal peptide directing secretion. A propeptide spans Arg-18–Asp-79 (activation peptide). The N-linked (GlcNAc...) asparagine glycan is linked to Asn-38. Intrachain disulfides connect Cys-93/Cys-122, Cys-105/Cys-150, Cys-141/Cys-208, Cys-142/Cys-146, Cys-179/Cys-212, and Cys-187/Cys-198. Cys-108 is a catalytic residue. Asn-192 carries N-linked (GlcNAc...) asparagine glycosylation. Active-site residues include His-279 and Asn-299.

This sequence belongs to the peptidase C1 family. As to quaternary structure, dimer of a heavy chain and a light chain cross-linked by a disulfide bond.

The protein localises to the lysosome. The catalysed reaction is Hydrolysis of proteins with broad specificity for peptide bonds. Preferentially cleaves -Arg-Arg-|-Xaa bonds in small molecule substrates (thus differing from cathepsin L). In addition to being an endopeptidase, shows peptidyl-dipeptidase activity, liberating C-terminal dipeptides.. Thiol protease which is believed to participate in intracellular degradation and turnover of proteins. Has also been implicated in tumor invasion and metastasis. The polypeptide is Cathepsin B (CTSB) (Gallus gallus (Chicken)).